The chain runs to 219 residues: Mediator of RNA polymerase II transcription subunit 20b (219 aa).

Belongs to the Mediator complex subunit 20 family. In terms of assembly, component of the Mediator complex.

The protein resides in the nucleus. Component of the Mediator complex, a coactivator involved in the regulated transcription of nearly all RNA polymerase II-dependent genes. Mediator functions as a bridge to convey information from gene-specific regulatory proteins to the basal RNA polymerase II transcription machinery. The Mediator complex, having a compact conformation in its free form, is recruited to promoters by direct interactions with regulatory proteins and serves for the assembly of a functional preinitiation complex with RNA polymerase II and the general transcription factors. In Arabidopsis thaliana (Mouse-ear cress), this protein is Mediator of RNA polymerase II transcription subunit 20b (MED20B).